The chain runs to 120 residues: NAD(P)H-quinone oxidoreductase subunit 3 (120 aa).

3 consecutive transmembrane segments (helical) span residues 10 to 30, 64 to 84, and 89 to 109; these read FLGF…TNLI, MFAL…PWAV, and LGLL…IALA.

This sequence belongs to the complex I subunit 3 family. As to quaternary structure, NDH-1 can be composed of about 15 different subunits; different subcomplexes with different compositions have been identified which probably have different functions.

It localises to the cellular thylakoid membrane. The enzyme catalyses a plastoquinone + NADH + (n+1) H(+)(in) = a plastoquinol + NAD(+) + n H(+)(out). The catalysed reaction is a plastoquinone + NADPH + (n+1) H(+)(in) = a plastoquinol + NADP(+) + n H(+)(out). Its function is as follows. NDH-1 shuttles electrons from an unknown electron donor, via FMN and iron-sulfur (Fe-S) centers, to quinones in the respiratory and/or the photosynthetic chain. The immediate electron acceptor for the enzyme in this species is believed to be plastoquinone. Couples the redox reaction to proton translocation, and thus conserves the redox energy in a proton gradient. Cyanobacterial NDH-1 also plays a role in inorganic carbon-concentration. The polypeptide is NAD(P)H-quinone oxidoreductase subunit 3 (Prochlorococcus marinus subsp. pastoris (strain CCMP1986 / NIES-2087 / MED4)).